The sequence spans 369 residues: Glycolate oxidase 5 (369 aa).

In terms of domain architecture, FMN hydroxy acid dehydrogenase spans 1-360 (MGEITNVTEY…TRNHVITEAD (360 aa)). Tyr-25 is a glyoxylate binding site. Residues 78–80 (PSA), Ser-107, 128–130 (QLY), and Thr-156 each bind FMN. Tyr-130 serves as a coordination point for glyoxylate. Glyoxylate is bound at residue Arg-165. FMN contacts are provided by Lys-231 and Ser-253. 2 residues coordinate glyoxylate: His-255 and Arg-258. His-255 acts as the Proton acceptor in catalysis. Residues 286 to 290 (DGGVR) and 309 to 310 (GR) contribute to the FMN site. The short motif at 367 to 369 (SRL) is the Microbody targeting signal element.

The protein belongs to the FMN-dependent alpha-hydroxy acid dehydrogenase family. As to quaternary structure, homotetramer. FMN is required as a cofactor.

It localises to the peroxisome. The enzyme catalyses glycolate + O2 = glyoxylate + H2O2. It participates in photosynthesis; photorespiration; glycine from 2-phosphoglycolate: step 2/3. In terms of biological role, catalyzes the oxidation of glycolate to glyoxylate, with a reduction of O2 to H2O2. Is a key enzyme in photorespiration in green plants. The chain is Glycolate oxidase 5 (GLO5) from Oryza sativa subsp. japonica (Rice).